Consider the following 771-residue polypeptide: MTANRLAESLLALSQQEELADLPKDYLLSESEDEGDNDGERKHQKLLEAISSLDGKNRRKLAERSEASLKVSEFNVSSEGSGEKLVLADLLEPVKTSSSLATVKKQLSRVKSKKTVELPLNKEEIERIHREVAFNKTAQVLSKWDPVVLKNRQAEQLVFPLEKEEPAIAPIEHVLSGWKARTPLEQEIFNLLHKNKQPVTDPLLTPVEKASLRAMSLEEAKMRRAELQRARALQSYYEAKARREKKIKSKKYHKVVKKGKAKKALKEFEQLRKVNPAAALEELEKIEKARMMERMSLKHQNSGKWAKSKAIMAKYDLEARQAMQEQLSKNKELTQKLQVASESEEEEGGTEDVEELLVPDVVNEVQMNADGPNPWMLRSCTSDTKEAATQEDPEQLPELEAHGVSESEGEERPVAEEEILLREFEERRSLRKRSELSQDAEPAGSQETKDSGSQEVLSELRVLSQKLKENHQSRKQKASSEGTIPQVQREEPAPEEEEPLLLQRPERVQTLEELEELGKEECFQNKELPRPVLEGQQSERTPNNRPDAPKEKKKKEQMIDLQNLLTTQSPSVKSLAVPTIEELEDEEERNHRQMIKEAFAGDDVIRDFLKEKREAVEASKPKDVDLTLPGWGEWGGVGLKPSAKKRRRFLIKAPEGPPRKDKNLPNVIINEKRNIHAAAHQVRVLPYPFTHHWQFERTIQTPIGSTWNTQRAFQKLTTPKVVTKPGHIINPIKAEDVGYRSSSRSDLSVIQRNPKRITTRHKKQLKKCSVD.

The tract at residues 23–49 (PKDYLLSESEDEGDNDGERKHQKLLEA) is disordered. Residues serine 29, serine 31, serine 52, serine 77, and serine 81 each carry the phosphoserine modification. Residues 40 to 67 (ERKHQKLLEAISSLDGKNRRKLAERSEA) are a coiled coil. Residue lysine 122 forms a Glycyl lysine isopeptide (Lys-Gly) (interchain with G-Cter in SUMO2) linkage. Threonine 205 is modified (phosphothreonine). 2 coiled-coil regions span residues 216–290 (SLEE…EKAR) and 317–347 (LEAR…EEEE). Disordered regions lie at residues 334–355 (TQKL…DVEE) and 367–557 (MNAD…KKEQ). The span at 342 to 355 (ESEEEEGGTEDVEE) shows a compositional bias: acidic residues. Over residues 399 to 436 (LEAHGVSESEGEERPVAEEEILLREFEERRSLRKRSEL) the composition is skewed to basic and acidic residues. Phosphoserine is present on residues serine 405 and serine 407. Residue arginine 433 is modified to Citrulline. Phosphoserine is present on residues serine 437 and serine 445. A Glycyl lysine isopeptide (Lys-Gly) (interchain with G-Cter in SUMO2) cross-link involves residue lysine 449. Residue serine 453 is modified to Phosphoserine. Positions 504 to 529 (RPERVQTLEELEELGKEECFQNKELP) are enriched in basic and acidic residues. A Glycyl lysine isopeptide (Lys-Gly) (interchain with G-Cter in SUMO2) cross-link involves residue lysine 519. A compositionally biased stretch (polar residues) spans 535 to 544 (GQQSERTPNN). A compositionally biased stretch (basic and acidic residues) spans 547 to 557 (DAPKEKKKKEQ). Serine 569 is modified (phosphoserine). A Citrulline modification is found at arginine 589. Lysine 733 participates in a covalent cross-link: Glycyl lysine isopeptide (Lys-Gly) (interchain with G-Cter in SUMO2). Positions 740–751 (RSSSRSDLSVIQ) are enriched in polar residues. The disordered stretch occupies residues 740-771 (RSSSRSDLSVIQRNPKRITTRHKKQLKKCSVD). The span at 753–771 (NPKRITTRHKKQLKKCSVD) shows a compositional bias: basic residues.

The protein belongs to the UTP14 family. As to quaternary structure, interacts with DHX37. In terms of processing, citrullinated by PADI4. In terms of tissue distribution, ubiquitously expressed.

It is found in the nucleus. Its subcellular location is the nucleolus. In terms of biological role, may be required for ribosome biogenesis. The protein is U3 small nucleolar RNA-associated protein 14 homolog A (UTP14A) of Homo sapiens (Human).